We begin with the raw amino-acid sequence, 150 residues long: Large ribosomal subunit protein bL9 (150 aa).

Belongs to the bacterial ribosomal protein bL9 family.

Binds to the 23S rRNA. This is Large ribosomal subunit protein bL9 from Shewanella woodyi (strain ATCC 51908 / MS32).